A 153-amino-acid chain; its full sequence is L-alanine exporter AlaE (153 aa).

A run of 4 helical transmembrane segments spans residues Val16–Met36, Leu42–Tyr62, Leu86–Ala106, and Ala114–Glu134.

This sequence belongs to the AlaE exporter family.

The protein localises to the cell inner membrane. In terms of biological role, exports L-alanine. The polypeptide is L-alanine exporter AlaE (Musicola paradisiaca (strain Ech703) (Dickeya paradisiaca)).